The chain runs to 400 residues: tRNA(Met) cytidine acetate ligase (400 aa).

ATP contacts are provided by residues 7–20 (IVEY…HQYH), glycine 101, asparagine 162, and arginine 187.

This sequence belongs to the TmcAL family.

Its subcellular location is the cytoplasm. The catalysed reaction is cytidine(34) in elongator tRNA(Met) + acetate + ATP = N(4)-acetylcytidine(34) in elongator tRNA(Met) + AMP + diphosphate. Its function is as follows. Catalyzes the formation of N(4)-acetylcytidine (ac(4)C) at the wobble position of elongator tRNA(Met), using acetate and ATP as substrates. First activates an acetate ion to form acetyladenylate (Ac-AMP) and then transfers the acetyl group to tRNA to form ac(4)C34. The polypeptide is tRNA(Met) cytidine acetate ligase (Oceanobacillus iheyensis (strain DSM 14371 / CIP 107618 / JCM 11309 / KCTC 3954 / HTE831)).